A 138-amino-acid chain; its full sequence is MAPK kinase substrate protein At1g80180 (138 aa).

The disordered stretch occupies residues T52–R138. Over residues K69–R81 the composition is skewed to basic and acidic residues. Residue S98 is modified to Phosphoserine. Residue S105 is modified to Phosphoserine; by MAPK6. A compositionally biased stretch (basic residues) spans Q121–R138.

Expressed in developing cotyledons, mature cotyledons, cotyledon epidermis and stomata.

In terms of biological role, may play a role in the regulation of stomata patterning. The protein is MAPK kinase substrate protein At1g80180 of Arabidopsis thaliana (Mouse-ear cress).